The primary structure comprises 1726 residues: Merozoite surface protein 1 (1726 aa).

The N-terminal stretch at 1–19 is a signal peptide; that stretch reads MKIIFFLCSFLFFIINTQC. Residues 61–124 show a composition bias toward low complexity; sequence KGASAQSGTS…SGTSGTSPSS (64 aa). Residues 61-149 are disordered; sequence KGASAQSGTS…PPADASDSDA (89 aa). The segment covering 125–134 has biased composition (polar residues); it reads RSNTLPRSNT. Asn-133 is a glycosylation site (N-linked (GlcNAc...) asparagine). Residues 135-144 are compositionally biased toward low complexity; sequence SSGASPPADA. Residues Asn-272, Asn-501, Asn-567, and Asn-638 are each glycosylated (N-linked (GlcNAc...) asparagine). Residues 735-771 form a disordered region; that stretch reads SETTEDGGHSTHTLSQSGETEVTEETEETEETVGHTT. Positions 755-765 are enriched in acidic residues; the sequence is EVTEETEETEE. N-linked (GlcNAc...) asparagine glycosylation is found at Asn-827, Asn-924, Asn-944, Asn-990, Asn-1016, Asn-1114, and Asn-1221. Residues 914-952 are compositionally biased toward low complexity; sequence TGTSSTSSPGNTTVNTAQSATHSNSQNQQSNASSTNTQN. Residues 914 to 961 form a disordered region; sequence TGTSSTSSPGNTTVNTAQSATHSNSQNQQSNASSTNTQNGVAVSSGPA. Disordered regions lie at residues 1254–1284 and 1476–1497; these read VTPPQPDVTPSPLSVRVSGSSGSTKEETQIP and KEKFPSSPPTTPPSPAKTDEQK. Positions 1270–1284 are enriched in polar residues; the sequence is VSGSSGSTKEETQIP. Residues 1481-1490 are compositionally biased toward pro residues; it reads SSPPTTPPSP. Asn-1613 is a glycosylation site (N-linked (GlcNAc...) asparagine). EGF-like domains lie at 1617-1657 and 1658-1705; these read HQCV…VENP and NPTC…IFCS. Disulfide bonds link Cys-1619/Cys-1630, Cys-1624/Cys-1640, Cys-1642/Cys-1653, Cys-1661/Cys-1674, Cys-1668/Cys-1688, and Cys-1690/Cys-1704. The GPI-anchor amidated serine moiety is linked to residue Ser-1705. A propeptide spans 1706-1726 (removed in mature form); it reads SSNFLGISFLLILMLILYSFI.

Forms a complex composed of subunits p83, p30, p38, and p42 which remain non-covalently associated; the complex is formed at the merozoite surface prior to egress from host erythrocytes. Forms a complex composed of processed MSP1 subunits, MSP6 subunit p36 and MSP7; the complex is formed at the merozoite surface prior to egress from host erythrocytes. Within the complex, interacts (via subunit p38) with MSP6 subunit p36 and (via subunits p83, p30 and p38) with MSP7 (via subunit p22). Forms a complex composed of MSP1, MSP6, DBLMSP1 and DBLMSP2. Within the complex, interacts (via subunit p38) with DBLMSP1 and DBLMSP2. Forms a complex composed of MSP1, and rhoptry proteins RhopH3, RAP1 and CLAG9/RhopH3. Within the complex, interacts (via subunits p42 and p19) with RhopH3 (via C-terminus). Forms a complex composed of MSP1, MSP6, MSP7, MSP9 and MSP3; within the complex, MSP6 and MSP9 mediate the binding to the host erythrocyte. Interacts (via subunits p19 and p42) with MSP9; the interaction is direct; MSP1 subunits p19 or p42, and MSP9 form a co-ligand complex that interacts with host SLC4A1/Band 3 protein. May interact with PFD6. Interacts with host spectrin. In terms of assembly, interacts with host glycophorin GYPA in a sialic acid-independent manner. As to quaternary structure, interacts with host proinflammatory cytokine S100P; the interaction blocks S100P inflammatory and chemotactic activities. Interacts with host SLC4A1/Band 3 (via 5ABC region) on the host erythrocyte surface in a sialic acid-independent manner. The p190 precursor is cleaved by SUB1 prior to merozoite egress into 4 subunits p83, p30, p38, and p42 which remain non-covalently associated. SUB1-mediated proteolytic cleavage occurs in an orderly manner; the first cleavage occurs at the p30/p38 site, followed by cleavage at the p83/p30 site, the last cleavage occurs at the p38/p42 site. The order of cleavage is essential for parasite viability. SUB1-mediated processing is essential for merozoite egress. In a second processing step during erythrocyte invasion, p42 is cleaved by SUB2 into p33 and p19; the latter remains attached to the merozoite surface via its GPI-anchor and is endocytosed during the subsequent ring stage.

It localises to the cell membrane. The protein localises to the secreted. Its subcellular location is the vacuole membrane. In terms of biological role, during the asexual blood stage, involved in merozoite egress from host erythrocytes possibly via its interaction with the host cytoskeleton protein spectrin resulting in the destabilization of the host cytoskeleton and thus leading to erythrocyte cell membrane rupture. Involved in the binding to host erythrocytes and is required for host erythrocyte invasion. Functionally, by binding to host proinflammatory cytokine S100P may interfere with host immune responses. Its function is as follows. Involved in merozoite invasion of host erythrocytes. May play a role in the biogenesis and/or function of the food vacuole during the intraerythrocytic development. The chain is Merozoite surface protein 1 from Plasmodium falciparum (isolate Palo Alto / Uganda).